A 459-amino-acid chain; its full sequence is tRNA modification GTPase MnmE (459 aa).

3 residues coordinate (6S)-5-formyl-5,6,7,8-tetrahydrofolate: Arg-29, Glu-86, and Lys-125. The 162-residue stretch at 221–382 folds into the TrmE-type G domain; it reads GMNVVIAGRP…LTEHLKAVMG (162 aa). Asn-231 provides a ligand contact to K(+). Residues 231-236, 250-256, and 275-278 each bind GTP; these read NAGKSS, TNIEGTT, and DTAG. Ser-235 contacts Mg(2+). Thr-250, Ile-252, and Thr-255 together coordinate K(+). Position 256 (Thr-256) interacts with Mg(2+). Lys-459 provides a ligand contact to (6S)-5-formyl-5,6,7,8-tetrahydrofolate.

Belongs to the TRAFAC class TrmE-Era-EngA-EngB-Septin-like GTPase superfamily. TrmE GTPase family. Homodimer. Heterotetramer of two MnmE and two MnmG subunits. It depends on K(+) as a cofactor.

It is found in the cytoplasm. Exhibits a very high intrinsic GTPase hydrolysis rate. Involved in the addition of a carboxymethylaminomethyl (cmnm) group at the wobble position (U34) of certain tRNAs, forming tRNA-cmnm(5)s(2)U34. The polypeptide is tRNA modification GTPase MnmE (Marinomonas sp. (strain MWYL1)).